The sequence spans 1057 residues: mRNA export factor elf1 (1057 aa).

ABC transporter domains follow at residues 440–659 (IEEE…VKPE) and 692–1019 (LKMT…KKKL). Residues 477-484 (GHNGCGKS) and 726-733 (GPNGAGKS) each bind ATP. Ser733 bears the Phosphoserine mark. The region spanning 820–869 (RRVEALIGRQKLKKSFQYEIKWFGKPHKYNTWVSREILLENGFQKFVQAF) is the Chromo domain. Residues 1020-1036 (TRNEIKAKERRAREREL) show a composition bias toward basic and acidic residues. The segment at 1020-1057 (TRNEIKAKERRARERELAWLQSPKGTEKPKSFFSDDEE) is disordered. Phosphoserine is present on residues Ser1041 and Ser1053.

This sequence belongs to the ABC transporter superfamily. ABCF family. EF3 subfamily.

The protein resides in the cytoplasm. The protein localises to the nucleus. Its function is as follows. Has a direct role in the mRNA export process. Appears to act within the rae1 mediated mRNA export pathway. The chain is mRNA export factor elf1 (elf1) from Schizosaccharomyces pombe (strain 972 / ATCC 24843) (Fission yeast).